Reading from the N-terminus, the 118-residue chain is Ribonuclease P protein component (118 aa).

It belongs to the RnpA family. In terms of assembly, consists of a catalytic RNA component (M1 or rnpB) and a protein subunit.

The catalysed reaction is Endonucleolytic cleavage of RNA, removing 5'-extranucleotides from tRNA precursor.. Functionally, RNaseP catalyzes the removal of the 5'-leader sequence from pre-tRNA to produce the mature 5'-terminus. It can also cleave other RNA substrates such as 4.5S RNA. The protein component plays an auxiliary but essential role in vivo by binding to the 5'-leader sequence and broadening the substrate specificity of the ribozyme. The chain is Ribonuclease P protein component from Rickettsia typhi (strain ATCC VR-144 / Wilmington).